Reading from the N-terminus, the 283-residue chain is Putative F-box protein At1g60370 (283 aa).

The region spanning 4 to 53 (GEKLESIPIDLIIEIHSRLPAESVARFRCVSKLWGSMFRRPYFTELFLTR) is the F-box domain.

This Arabidopsis thaliana (Mouse-ear cress) protein is Putative F-box protein At1g60370.